Reading from the N-terminus, the 392-residue chain is Alanine racemase 2 (392 aa).

The active-site Proton acceptor; specific for D-alanine is the Lys-40. At Lys-40 the chain carries N6-(pyridoxal phosphate)lysine. Arg-138 lines the substrate pocket. The Proton acceptor; specific for L-alanine role is filled by Tyr-266. A substrate-binding site is contributed by Met-314.

It belongs to the alanine racemase family. It depends on pyridoxal 5'-phosphate as a cofactor.

The enzyme catalyses L-alanine = D-alanine. The protein operates within amino-acid biosynthesis; D-alanine biosynthesis; D-alanine from L-alanine: step 1/1. Catalyzes the interconversion of L-alanine and D-alanine. May also act on other amino acids. The sequence is that of Alanine racemase 2 (alr2) from Oceanobacillus iheyensis (strain DSM 14371 / CIP 107618 / JCM 11309 / KCTC 3954 / HTE831).